The following is a 241-amino-acid chain: Large ribosomal subunit protein uL3 (241 aa).

Disordered stretches follow at residues 139–166 (VSHR…PGHM) and 209–241 (KKPL…KEGA). N5-methylglutamine is present on Gln151.

This sequence belongs to the universal ribosomal protein uL3 family. In terms of assembly, part of the 50S ribosomal subunit. Forms a cluster with proteins L14 and L19. In terms of processing, methylated by PrmB.

Functionally, one of the primary rRNA binding proteins, it binds directly near the 3'-end of the 23S rRNA, where it nucleates assembly of the 50S subunit. The protein is Large ribosomal subunit protein uL3 of Nitrobacter hamburgensis (strain DSM 10229 / NCIMB 13809 / X14).